A 656-amino-acid chain; its full sequence is UvrABC system protein B (656 aa).

The Helicase ATP-binding domain maps to 24–409 (QGVRNRTPSQ…QGHIVEQILR (386 aa)). 37 to 44 (GTTGSGKT) serves as a coordination point for ATP. The Beta-hairpin signature appears at 90–113 (YYDYYQPEAYIARNDTYIEKSLLI). A Helicase C-terminal domain is found at 426-589 (QVDDLLEEIR…ITPKPIIKAI (164 aa)). In terms of domain architecture, UVR spans 616-651 (EKLIKKYENLMLQAANAFRFDEAAQYRDKMKAAKEQ).

Belongs to the UvrB family. In terms of assembly, forms a heterotetramer with UvrA during the search for lesions. Interacts with UvrC in an incision complex.

Its subcellular location is the cytoplasm. In terms of biological role, the UvrABC repair system catalyzes the recognition and processing of DNA lesions. A damage recognition complex composed of 2 UvrA and 2 UvrB subunits scans DNA for abnormalities. Upon binding of the UvrA(2)B(2) complex to a putative damaged site, the DNA wraps around one UvrB monomer. DNA wrap is dependent on ATP binding by UvrB and probably causes local melting of the DNA helix, facilitating insertion of UvrB beta-hairpin between the DNA strands. Then UvrB probes one DNA strand for the presence of a lesion. If a lesion is found the UvrA subunits dissociate and the UvrB-DNA preincision complex is formed. This complex is subsequently bound by UvrC and the second UvrB is released. If no lesion is found, the DNA wraps around the other UvrB subunit that will check the other stand for damage. The chain is UvrABC system protein B from Chlamydia abortus (strain DSM 27085 / S26/3) (Chlamydophila abortus).